The chain runs to 214 residues: Non-structural protein NP-1 (214 aa).

Disordered regions lie at residues Met-1–Tyr-87 and Glu-192–Asn-214. Residues Ser-33–Gly-43 show a composition bias toward basic residues. The span at Glu-44–Gln-55 shows a compositional bias: basic and acidic residues. Residues Glu-56–Ala-71 show a composition bias toward polar residues. Acidic residues predominate over residues Glu-192–Met-201.

This sequence belongs to the Bocaparvovirus Non-structural protein NP-1 family.

It localises to the host nucleus. Required for the expression of the capsid proteins. Performs the splicing and internal polyadenylation of the viral capsid-encoding mRNA precursor, which allows its maturation and expression. Transactivates the viral promoter. This chain is Non-structural protein NP-1 (NP1), found in Human bocavirus 2 (HBoV2).